A 316-amino-acid polypeptide reads, in one-letter code: MTSKNSIQKALYLAFERLQWSELRDSVPLTLSEQDLENLRGINEKISLSEVTDIYLPLSRLLNLIVKAKQQRGLVVDEFLGQKPSRSPYIISIAGSVAVGKSTTARILQALLRHWPEHPKVDLVTTDGFLYPLADLKRKGLLQRKGFPESYDMKMLVEFISAVKSGQPHVKAPIYSHVTYDRVKNQHQTVSQPDILILEGLNVLQTGLDSPVDTRRPFVSDFVDFSIYVDAEEPLLKQWYKERFLQFRSGAFSDKKSYFHHYSSLTDDEANTIAANIWDTINGPNLQLNIQPTRERAHLILQKGQDHLMSHVLMRK.

95 to 102 is a binding site for ATP; sequence GSVAVGKS.

Belongs to the prokaryotic pantothenate kinase family.

It is found in the cytoplasm. The catalysed reaction is (R)-pantothenate + ATP = (R)-4'-phosphopantothenate + ADP + H(+). It functions in the pathway cofactor biosynthesis; coenzyme A biosynthesis; CoA from (R)-pantothenate: step 1/5. This chain is Pantothenate kinase, found in Shewanella baltica (strain OS223).